We begin with the raw amino-acid sequence, 354 residues long: tRNA N6-adenosine threonylcarbamoyltransferase (354 aa).

His-111 and His-115 together coordinate Fe cation. Substrate is bound by residues 134-138 (LVSGG), Asp-167, Gly-180, and Asn-279. Residue Asp-319 participates in Fe cation binding.

It belongs to the KAE1 / TsaD family. Fe(2+) serves as cofactor.

It is found in the cytoplasm. It carries out the reaction L-threonylcarbamoyladenylate + adenosine(37) in tRNA = N(6)-L-threonylcarbamoyladenosine(37) in tRNA + AMP + H(+). Its function is as follows. Required for the formation of a threonylcarbamoyl group on adenosine at position 37 (t(6)A37) in tRNAs that read codons beginning with adenine. Is involved in the transfer of the threonylcarbamoyl moiety of threonylcarbamoyl-AMP (TC-AMP) to the N6 group of A37, together with TsaE and TsaB. TsaD likely plays a direct catalytic role in this reaction. The sequence is that of tRNA N6-adenosine threonylcarbamoyltransferase from Neisseria meningitidis serogroup C / serotype 2a (strain ATCC 700532 / DSM 15464 / FAM18).